Consider the following 235-residue polypeptide: METTLLFFSQINMCESKEKTFFKLIHGSGKEETSKEAKIRAKEKRNRLSLLVQKPEFHEDTRSSRSGHLAKETRVSPEEAVKWGESFDKLLSHRDGLEAFTRFLKTEFSEENIEFWIACEDFKKSKGPQQIHLKAKAIYEKFIQTDAPKEVNLDFHTKEVITNSITQPTLHSFDAAQSRVYQLMEQDSYTRFLKSDIYLDLMEGRPQRPTNLRRRSRSFTCNEFQDVQSDVAIWL.

Serine 49 bears the Phosphoserine mark. In terms of domain architecture, RGS spans 86 to 202 (SFDKLLSHRD…LKSDIYLDLM (117 aa)). 2 positions are modified to phosphoserine: serine 216 and serine 218.

As to expression, expressed in peripheral leukocytes, bone marrow, platelet, spleen and fetal liver.

It is found in the cytoplasm. Functionally, inhibits signal transduction by increasing the GTPase activity of G protein alpha subunits thereby driving them into their inactive GDP-bound form. Binds to G(i) alpha-1, G(i) alpha-2, G(i) alpha-3 and G(q) alpha. This chain is Regulator of G-protein signaling 18 (RGS18), found in Homo sapiens (Human).